Consider the following 561-residue polypeptide: MRFSRLYAPTLREDPSDAEIPSQALLQRAGFIRKIAAGVYTYLPLARRTLLKIENIVREEMDKIGAQEILMPIIQPAELWQRSGRWDDYGPEMMKLKDRHNRDFTLGPTHEELVTELIRNELNSYKQLPVSLYQITTKFRDEIRPRFGVLRAREFIMKDAYSFHDSWESLDETYQLFKDAYSKIMERIGLRYSVIEAATGAIGGNESHEFVAFANTGESNVLYCDCGYAGSDERVPYKGDYEKDDEAEKTLEKVYTPNVRTVEQVAEFLNVPIRKIVKSLVFKGRDGFVMALVPGDRELNFEKLKAYLGDQSLQMAEAEEILEEFGVPIGFLGPVGADKVRIVADYGIKYMKNFVVGGMEKDYHYLNVNLDRDFKVNEWTDLVVVQIGDPCPVCGKPLKGEKGIELGHIFKLGTKYSDSMDVKYMDKDGKMKSFIMGCYGWGISRTLGAIVEQLHDDDGIIWPRSVAPYEVDIVVVGKEKEKEFSEKLYSYLLDKGVDVIIDDRNVSPGVKFKDADLIGFPIRITVGRKLKEGKVEIKERGKEAILVDANMEQILNAINEM.

The protein belongs to the class-II aminoacyl-tRNA synthetase family. ProS type 1 subfamily. As to quaternary structure, homodimer.

Its subcellular location is the cytoplasm. It catalyses the reaction tRNA(Pro) + L-proline + ATP = L-prolyl-tRNA(Pro) + AMP + diphosphate. Catalyzes the attachment of proline to tRNA(Pro) in a two-step reaction: proline is first activated by ATP to form Pro-AMP and then transferred to the acceptor end of tRNA(Pro). As ProRS can inadvertently accommodate and process non-cognate amino acids such as alanine and cysteine, to avoid such errors it has two additional distinct editing activities against alanine. One activity is designated as 'pretransfer' editing and involves the tRNA(Pro)-independent hydrolysis of activated Ala-AMP. The other activity is designated 'posttransfer' editing and involves deacylation of mischarged Ala-tRNA(Pro). The misacylated Cys-tRNA(Pro) is not edited by ProRS. This is Proline--tRNA ligase from Thermosipho africanus (strain TCF52B).